Reading from the N-terminus, the 84-residue chain is Replication regulatory protein repA2 (84 aa).

The segment covering 1–13 has biased composition (polar residues); sequence MSQTENAVTSSSG. Residues 1–31 are disordered; that stretch reads MSQTENAVTSSSGAKRAYRKGNPLSDAEKQR.

Its function is as follows. This protein is involved in the determination of copy number in gene replication. It binds to the repA promoter thus inhibiting the synthesis of the mRNA for the initiator protein RepA. In Escherichia coli, this protein is Replication regulatory protein repA2 (repA2).